Consider the following 162-residue polypeptide: Blue copper protein 1b (162 aa).

A signal peptide spans 1–23 (MASSRVVLILSISMVLLSSVAIA). In terms of domain architecture, Phytocyanin spans 25 to 125 (TDYIVGDDKG…QMKLVITVLA (101 aa)). Residue histidine 65 participates in Cu cation binding. A glycan (N-linked (GlcNAc...) asparagine) is linked at asparagine 71. Cysteine 78 and cysteine 112 are disulfide-bonded. 3 residues coordinate Cu cation: cysteine 106, histidine 111, and methionine 117. Residues 142–162 (VVSSLFGVVMAIMVAIAVIFA) traverse the membrane as a helical segment.

The protein resides in the membrane. This Medicago truncatula (Barrel medic) protein is Blue copper protein 1b.